A 229-amino-acid chain; its full sequence is Protein 33K (229 aa).

The segment at 1–157 is disordered; that stretch reads MAPKKKLQLP…GALRLAPNEP (157 aa). Residues 14 to 54 show a composition bias toward acidic residues; that stretch reads TDEEEYWDSQAEEVLDEEEEDMMEDWESLDEEASEVEEVSD. Low complexity-rich tracts occupy residues 55-64, 71-82, and 100-122; these read ETPSPSVAFP, SATGSSMATTSA, and TTGT…AAAT. The interval 172–199 is necessary for nuclear subcellular location; the sequence is YAIFQQSRGQEQELKIKNRSLRSLTRSC. The tract at residues 178–198 is RS-repeat; required for splicing enhancer activity; the sequence is SRGQEQELKIKNRSLRSLTRS.

The protein belongs to the adenoviridae splicing factor family. As to quaternary structure, homooligomer. Interacts with DBP; this interaction occurs at a unique vertex during genome packaging. Interacts with IVa2; this interaction occurs at a unique vertex during genome packaging and seems to potentiate IVa2 and 33K oligomerization. In terms of processing, phosphorylated in vitro by human PKA and PRKDC. PRKDC inhibits, whereas PKA activates the splicing factor.

It localises to the host nucleus. In terms of biological role, promotes alternative splicing of late transcripts by promoting splicing at weak 3' splice sites. Required for the temporal activation of major late pre-mRNA splicing at late times of infection. Induces the splicing and expression of the late capsid vertex protein. Functionally, probably functions as the small terminase that is part of the molecular motor that translocates genomic DNA in empty capsid during DNA packaging. This motor is located at a unique vertex and comprises at least the IVa2 ATPase, the small terminase 33K and probably a portal. Forms a ring-like structure of about 17 nm in which genomic DNA is translocated into the capsid. Stimulates IVa2 ATPase activity in the presence of the viral genome. Once the DNA is packaged, the terminase detaches: the 33K protein is present in the empty particles, but not in the mature virions. Also involved in virion assembly. This chain is Protein 33K, found in Homo sapiens (Human).